The following is a 1484-amino-acid chain: Chromosome partition protein MukB (1484 aa).

34–41 provides a ligand contact to ATP; that stretch reads GGNGAGKS. Coiled coils occupy residues 326 to 418, 444 to 472, and 509 to 602; these read LEAD…QYNQ, LDTF…QTAH, and RHLA…QRAP. Residues 666–783 are flexible hinge; the sequence is PGGAEDQRLN…SLPIFGRAAR (118 aa). 3 coiled-coil regions span residues 835-923, 977-1116, and 1209-1265; these read EAEI…AKLE, EMLS…AKAG, and VEAI…LQSV. The disordered stretch occupies residues 1049-1074; that stretch reads ADSGAEERARQRRDELHAQLSNNRSR. Residues 1051-1065 are compositionally biased toward basic and acidic residues; the sequence is SGAEERARQRRDELH.

The protein belongs to the SMC family. MukB subfamily. As to quaternary structure, homodimerization via its hinge domain. Binds to DNA via its C-terminal region. Interacts, and probably forms a ternary complex, with MukE and MukF via its C-terminal region. The complex formation is stimulated by calcium or magnesium. Interacts with tubulin-related protein FtsZ.

The protein resides in the cytoplasm. It is found in the nucleoid. Functionally, plays a central role in chromosome condensation, segregation and cell cycle progression. Functions as a homodimer, which is essential for chromosome partition. Involved in negative DNA supercoiling in vivo, and by this means organize and compact chromosomes. May achieve or facilitate chromosome segregation by condensation DNA from both sides of a centrally located replisome during cell division. This Salmonella dublin (strain CT_02021853) protein is Chromosome partition protein MukB.